We begin with the raw amino-acid sequence, 119 residues long: Large ribosomal subunit protein bL20 (119 aa).

The protein belongs to the bacterial ribosomal protein bL20 family.

Binds directly to 23S ribosomal RNA and is necessary for the in vitro assembly process of the 50S ribosomal subunit. It is not involved in the protein synthesizing functions of that subunit. The sequence is that of Large ribosomal subunit protein bL20 from Caldanaerobacter subterraneus subsp. tengcongensis (strain DSM 15242 / JCM 11007 / NBRC 100824 / MB4) (Thermoanaerobacter tengcongensis).